The primary structure comprises 261 residues: MYKDLEGKVVVITGSSTGLGKAMAIRFATEKAKVVVNYRSKEEEANSVLEEIKKVGGEAIAVKGDVTVESDVINLVQSSIKEFGKLDVMINNAGMENPVSSHEMSLSDWNKVIDTNLTGAFLGSREAIKYFVENDIKGTVINMSSVHEKIPWPLFVHYAASKGGMKLMTETLALEYAPKGIRVNNIGPGAINTPINAEKFADPEQRADVESMIPMGYIGEPEEIAAVAAWLASSEASYVTGITLFADGGMTQYPSFQAGRG.

Position 11 to 35 (11 to 35 (VITGSSTGLGKAMAIRFATEKAKVV)) interacts with NADP(+). A substrate-binding site is contributed by serine 145. The Proton acceptor role is filled by tyrosine 158.

Belongs to the short-chain dehydrogenases/reductases (SDR) family. In terms of assembly, homotetramer.

It catalyses the reaction D-glucose + NAD(+) = D-glucono-1,5-lactone + NADH + H(+). The enzyme catalyses D-glucose + NADP(+) = D-glucono-1,5-lactone + NADPH + H(+). May play some role in spore germination. The chain is Glucose 1-dehydrogenase 1 (gdhI) from Priestia megaterium (Bacillus megaterium).